The following is a 76-amino-acid chain: Sec-independent protein translocase protein TatA (76 aa).

A helical transmembrane segment spans residues 1–21 (MGSFSIWHWLIVLVIVMLVFG). Composition is skewed to basic and acidic residues over residues 41-50 (DGMKDGEDKG) and 57-76 (KELR…SRQQ). Residues 41–76 (DGMKDGEDKGAQPAASKELRDSTTIDVDAKEKSRQQ) are disordered.

This sequence belongs to the TatA/E family. As to quaternary structure, the Tat system comprises two distinct complexes: a TatABC complex, containing multiple copies of TatA, TatB and TatC subunits, and a separate TatA complex, containing only TatA subunits. Substrates initially bind to the TatABC complex, which probably triggers association of the separate TatA complex to form the active translocon.

The protein resides in the cell inner membrane. Part of the twin-arginine translocation (Tat) system that transports large folded proteins containing a characteristic twin-arginine motif in their signal peptide across membranes. TatA could form the protein-conducting channel of the Tat system. The protein is Sec-independent protein translocase protein TatA of Cupriavidus taiwanensis (strain DSM 17343 / BCRC 17206 / CCUG 44338 / CIP 107171 / LMG 19424 / R1) (Ralstonia taiwanensis (strain LMG 19424)).